Consider the following 85-residue polypeptide: Putative membrane protein insertion efficiency factor (85 aa).

The interval 62–85 is disordered; that stretch reads PLGSDGYDPVPEPKDRKPPHSPAG.

It belongs to the UPF0161 family.

It localises to the cell inner membrane. Its function is as follows. Could be involved in insertion of integral membrane proteins into the membrane. This chain is Putative membrane protein insertion efficiency factor, found in Ruegeria pomeroyi (strain ATCC 700808 / DSM 15171 / DSS-3) (Silicibacter pomeroyi).